We begin with the raw amino-acid sequence, 182 residues long: Heat shock protein beta-2 (182 aa).

Positions 55–163 (PAGEGSRAGA…DTEVNEVYIS (109 aa)) constitute a sHSP domain.

Belongs to the small heat shock protein (HSP20) family. As to quaternary structure, interacts with DMPK; may enhance its kinase activity. Expressed preferentially in skeletal muscle and heart but not in the lens.

Its subcellular location is the cytoplasm. It localises to the nucleus. May regulate the kinase DMPK. This Homo sapiens (Human) protein is Heat shock protein beta-2 (HSPB2).